Consider the following 147-residue polypeptide: Large ribosomal subunit protein uL13 (147 aa).

Belongs to the universal ribosomal protein uL13 family. As to quaternary structure, part of the 50S ribosomal subunit.

Functionally, this protein is one of the early assembly proteins of the 50S ribosomal subunit, although it is not seen to bind rRNA by itself. It is important during the early stages of 50S assembly. The protein is Large ribosomal subunit protein uL13 of Arthrobacter sp. (strain FB24).